The following is a 314-amino-acid chain: UPF0761 membrane protein VIBHAR_00593 (314 aa).

6 helical membrane-spanning segments follow: residues 41–61, 104–124, 143–163, 185–205, 217–237, and 249–269; these read YLAY…LSIL, MTAV…SNID, FSMY…SIAV, FLRW…YFLV, IGAA…AFYI, and ALAA…IVLI.

Belongs to the UPF0761 family.

The protein localises to the cell inner membrane. In Vibrio campbellii (strain ATCC BAA-1116), this protein is UPF0761 membrane protein VIBHAR_00593.